A 405-amino-acid polypeptide reads, in one-letter code: Cytochrome P450 130 (405 aa).

Substrate is bound by residues Asp93 and His97. Residues Arg101, Gly243, Arg295, Tyr318, Ser348, His352, and Cys354 each contribute to the heme site.

The protein belongs to the cytochrome P450 family. In terms of assembly, homodimer. The cofactor is heme.

The polypeptide is Cytochrome P450 130 (cyp130) (Mycobacterium tuberculosis (strain CDC 1551 / Oshkosh)).